The chain runs to 40 residues: Photosystem II reaction center protein J (40 aa).

The helical transmembrane segment at 8 to 28 (IPLWIIGTVTGIFGIGLIGIF) threads the bilayer.

The protein belongs to the PsbJ family. PSII is composed of 1 copy each of membrane proteins PsbA, PsbB, PsbC, PsbD, PsbE, PsbF, PsbH, PsbI, PsbJ, PsbK, PsbL, PsbM, PsbT, PsbX, PsbY, PsbZ, Psb30/Ycf12, at least 3 peripheral proteins of the oxygen-evolving complex and a large number of cofactors. It forms dimeric complexes.

Its subcellular location is the plastid membrane. One of the components of the core complex of photosystem II (PSII). PSII is a light-driven water:plastoquinone oxidoreductase that uses light energy to abstract electrons from H(2)O, generating O(2) and a proton gradient subsequently used for ATP formation. It consists of a core antenna complex that captures photons, and an electron transfer chain that converts photonic excitation into a charge separation. The polypeptide is Photosystem II reaction center protein J (Cuscuta reflexa (Southern Asian dodder)).